The chain runs to 853 residues: WEB family protein At5g16730, chloroplastic (853 aa).

Composition is skewed to low complexity over residues 1-27 (MASK…PATP) and 36-49 (KSET…STTT). A chloroplast-targeting transit peptide spans 1–84 (MASKTKTSLS…PTPPEKSQAR (84 aa)). Disordered regions lie at residues 1–106 (MASK…IKED), 386–465 (KEDL…SKKA), 666–765 (LAKK…SVEV), and 778–820 (KEAF…ALTA). The segment covering 92 to 101 (ESPQTTTRLS) has biased composition (polar residues). Positions 94-670 (PQTTTRLSQI…LEEAILAKKQ (577 aa)) form a coiled coil. 3 stretches are compositionally biased toward basic and acidic residues: residues 402–465 (EVSK…SKKA), 698–718 (NGHR…HEPP), and 732–753 (MEEK…KKDE). A compositionally biased stretch (acidic residues) spans 754–763 (SQDDDKDDSV). The segment covering 778–788 (KEAFPDKKSEL) has biased composition (basic and acidic residues). Phosphoserine is present on Ser790. A compositionally biased stretch (basic and acidic residues) spans 797–807 (SSKIDESDKTS).

This sequence belongs to the WEB family.

The protein resides in the plastid. Its subcellular location is the chloroplast. This is WEB family protein At5g16730, chloroplastic from Arabidopsis thaliana (Mouse-ear cress).